Reading from the N-terminus, the 295-residue chain is Diaminopimelate epimerase (295 aa).

Substrate contacts are provided by Asn13, Gln46, and Asn66. The active-site Proton donor is the Cys75. Residues Gly76–Asn77, Asn162, Asn195, and Glu213–Arg214 each bind substrate. Cys222 serves as the catalytic Proton acceptor. Gly223 to Thr224 is a substrate binding site.

This sequence belongs to the diaminopimelate epimerase family. As to quaternary structure, homodimer.

Its subcellular location is the cytoplasm. It catalyses the reaction (2S,6S)-2,6-diaminopimelate = meso-2,6-diaminopimelate. It participates in amino-acid biosynthesis; L-lysine biosynthesis via DAP pathway; DL-2,6-diaminopimelate from LL-2,6-diaminopimelate: step 1/1. Functionally, catalyzes the stereoinversion of LL-2,6-diaminopimelate (L,L-DAP) to meso-diaminopimelate (meso-DAP), a precursor of L-lysine and an essential component of the bacterial peptidoglycan. The sequence is that of Diaminopimelate epimerase from Psychrobacter arcticus (strain DSM 17307 / VKM B-2377 / 273-4).